The chain runs to 20 residues: Cruzioseptin-15 (20 aa).

As to expression, expressed by the skin glands.

Its subcellular location is the secreted. Its function is as follows. Has antimicrobial activity. This is Cruzioseptin-15 from Cruziohyla calcarifer (Splendid leaf frog).